The sequence spans 560 residues: Putative transport protein VS_1837 (560 aa).

5 helical membrane-spanning segments follow: residues 5–25, 37–57, 66–86, 91–111, and 155–175; these read VVLL…SIGL, LGNS…GFSF, FMLF…GIFF, HYLI…YFCS, and LGLV…VGLI. 2 RCK C-terminal domains span residues 203–292 and 293–376; these read RGLG…FRNG and KEVF…KIGF. The next 6 helical transmembrane spans lie at 386 to 406, 409 to 429, 450 to 470, 478 to 498, 506 to 526, and 539 to 559; these read LTAF…TMTF, VSFG…LGFL, LGLM…IFEH, VIGI…LVGA, ALLF…DIVN, and AGTY…IIII.

The protein belongs to the AAE transporter (TC 2.A.81) family. YbjL subfamily.

Its subcellular location is the cell membrane. This chain is Putative transport protein VS_1837, found in Vibrio atlanticus (strain LGP32) (Vibrio splendidus (strain Mel32)).